Here is a 370-residue protein sequence, read N- to C-terminus: E3 ubiquitin-protein ligase E3D (370 aa).

A2 bears the N-acetylalanine mark. The short motif at 129–159 is the BRAT1-like motif element; that stretch reads PLPSENWSALVGEWCCHPDPFANKPLHPREN. C144 serves as a coordination point for Zn(2+). The tract at residues 214–236 is interaction with UBE2C; it reads QPSEGSFPNIPRSQFVQSVIARC. Residues 332-368 form an HECT-like region; it reads LPSTTCLELLLILSRNNASLPLSLRQMNSFQLWCSHC.

In terms of assembly, interacts with UBE2C/UbcH10 (E2 ubiquitin-conjugating enzyme). In vitro, interacts with cyclin-B. Post-translationally, ubiquitinated by UBCH10 (E2 ubiquitin-conjugating enzyme).

The protein resides in the cytoplasm. It carries out the reaction S-ubiquitinyl-[E2 ubiquitin-conjugating enzyme]-L-cysteine + [acceptor protein]-L-lysine = [E2 ubiquitin-conjugating enzyme]-L-cysteine + N(6)-ubiquitinyl-[acceptor protein]-L-lysine.. It functions in the pathway protein modification; protein ubiquitination. E3 ubiquitin-protein ligase which accepts ubiquitin from specific E2 ubiquitin-conjugating enzymes, and transfers it to substrates, generally promoting their degradation by the proteasome. Independently of its E3 ubiquitin-protein ligase activity, acts as an inhibitor of CPSF3 endonuclease activity by blocking CPSF3 active site. This Rattus norvegicus (Rat) protein is E3 ubiquitin-protein ligase E3D (Ube3d).